Consider the following 31-residue polypeptide: Putative translational regulatory protein ArgL (31 aa).

Its function is as follows. May serve a regulatory role in expression of downstream gene argF; in an argL-argF-lacZ fusion mutation of the start codon to a stop codon in argL increases expression of beta-galactosidase. This Escherichia coli (strain K12) protein is Putative translational regulatory protein ArgL.